Reading from the N-terminus, the 206-residue chain is MELKLLNENGQEGAVVNASDVVFGRDYNEALIHQVVIAYQANARQGNRAQKDREQVKHTTKKPWRQKGTGRARAGMSSSPLWRGGGRIFPNSPEENFSHKVNKKMHRAGLCSIFSQLAREGRLSVVEDIILEAPKTKLLADKFKTMGLDSVLIITDTVDENLYLASRNLPHVAIVEPRYADPLSLIYFKKVLVTKAAVAQIEELLS.

Residues 46–78 (GNRAQKDREQVKHTTKKPWRQKGTGRARAGMSS) form a disordered region. The segment covering 58–70 (HTTKKPWRQKGTG) has biased composition (basic residues).

The protein belongs to the universal ribosomal protein uL4 family. Part of the 50S ribosomal subunit.

Its function is as follows. One of the primary rRNA binding proteins, this protein initially binds near the 5'-end of the 23S rRNA. It is important during the early stages of 50S assembly. It makes multiple contacts with different domains of the 23S rRNA in the assembled 50S subunit and ribosome. Forms part of the polypeptide exit tunnel. This Burkholderia cenocepacia (strain ATCC BAA-245 / DSM 16553 / LMG 16656 / NCTC 13227 / J2315 / CF5610) (Burkholderia cepacia (strain J2315)) protein is Large ribosomal subunit protein uL4.